The primary structure comprises 598 residues: Transcription factor dpl-1 (598 aa).

Disordered regions lie at residues 1–73 (MNPT…PTGL), 435–457 (NRPY…VNSG), and 573–598 (TEQP…DYFQ). The span at 13 to 22 (PAQSRPQVSL) shows a compositional bias: polar residues. The span at 55–64 (GVGGSSGAGG) shows a compositional bias: gly residues.

Belongs to the E2F/DP family. Component of the DRM complex, at least composed of lin-9, lin-35, lin-37, lin-52, lin-53, lin-54- dpl-1 and efl-1. Interacts (via N-terminus) with efl-1. Interacts (via C-terminus) with lin-35 (via C-terminus).

Its subcellular location is the nucleus. Synthetic multivulva class B (synMuvB) protein. SynMuvB proteins are required to repress the induction of vulval development by Ras signaling and probably act by forming the multiprotein DRM complex that represses transcription. May also negatively regulate vulval development in association with other SynMuv class B proteins such as lin-15A. Can stimulate E2F-dependent transcription. Plays a role in negatively regulating the progression through the G1 phase of the cell cycle during postembryonic development, most likely by acting as a transcriptional repressor in association with the cell cycle regulatory factor efl-1 and the transcriptional repressor lin-35, but may also act as a positive regulator of cell cycle entry. Involved in the regulation of intestinal cell division during postembryonic development, most likely in complex with efl-1 and lin-35. Promotes germ cell programmed cell death, probably together with efl-1, by positively regulating the expression of the apoptosis proteins ced-3 and ced-4. In particular, positively regulates the expression of ced-4 in response to starvation. Its role in programmed cell death may be in conjunction with cell cycle regulatory factor efl-1 and the synthetic multivulva class B proteins lin-35, lin-37 and lin-52, and is independent of the ced-1, ced-8 and ced-9 pathways. The sequence is that of Transcription factor dpl-1 from Caenorhabditis elegans.